The primary structure comprises 275 residues: Elongation factor Ts (275 aa).

Residues 76–79 are involved in Mg(2+) ion dislocation from EF-Tu; the sequence is TDFV.

The protein belongs to the EF-Ts family.

It is found in the cytoplasm. Its function is as follows. Associates with the EF-Tu.GDP complex and induces the exchange of GDP to GTP. It remains bound to the aminoacyl-tRNA.EF-Tu.GTP complex up to the GTP hydrolysis stage on the ribosome. The sequence is that of Elongation factor Ts from Mycolicibacterium paratuberculosis (strain ATCC BAA-968 / K-10) (Mycobacterium paratuberculosis).